Consider the following 41-residue polypeptide: Disintegrin obtustatin (41 aa).

4 disulfide bridges follow: Cys-1–Cys-10, Cys-6–Cys-29, Cys-7–Cys-34, and Cys-19–Cys-36. Residues 1 to 41 enclose the Disintegrin domain; it reads CTTGPCCRQCKLKPAGTTCWKTSLTSHYCTGKSCDCPLYPG. The Cell attachment site; atypical (KTS) signature appears at 21-23; it reads KTS.

It belongs to the disintegrin family. Short disintegrin subfamily. In terms of assembly, monomer. As to expression, expressed by the venom gland.

The protein resides in the secreted. Is a potent and selective inhibitor of alpha-1/beta-1 (ITGA1/ITGB1) integrin. It blocks the adhesion of alpha-1/beta-1-expressing K562 cells to immobilized collagens IV and I with IC(50) of 2 and 0.5 nM, respectively. Potently inhibits angiogenesis in chicken and in mouse model and reduces tumor development by half. Is 25-fold less potent than viperistatin. This is Disintegrin obtustatin from Macrovipera lebetina obtusa (Levant blunt-nosed viper).